The chain runs to 431 residues: tRNA (adenine(37)-N6)-methyltransferase (431 aa).

Residues 30–168 form the TsaA-like domain; it reads TEPIGYLESC…YIADYDSPQN (139 aa). S-adenosyl-L-methionine-binding positions include 47–49, 90–91, arginine 117, leucine 127, and 148–151; these read PRQ, HK, and IHGT. 2 disordered regions span residues 167-189 and 201-243; these read QNLE…ATAN and KAQP…DRER. A compositionally biased stretch (basic and acidic residues) spans 207 to 243; the sequence is STKEKPKCREHRTSDENSQKFRDTSEIQHTLPEDRER.

The protein belongs to the tRNA methyltransferase O family.

The enzyme catalyses N(6)-L-threonylcarbamoyladenosine(37) in tRNA + S-adenosyl-L-methionine = N(6)-methyl,N(6)-L-threonylcarbamoyladenosine(37) in tRNA + S-adenosyl-L-homocysteine + H(+). Its function is as follows. S-adenosyl-L-methionine-dependent methyltransferase responsible for the addition of the methyl group in the formation of N6-methyl-N6-threonylcarbamoyladenosine at position 37 (m(6)t(6)A37) of the tRNA anticodon loop of tRNA(Ser)(GCU). The methyl group of m(6)t(6)A37 may improve the efficiency of the tRNA decoding ability. May bind to tRNA. This Rattus norvegicus (Rat) protein is tRNA (adenine(37)-N6)-methyltransferase.